The primary structure comprises 515 residues: 2-isopropylmalate synthase (515 aa).

Positions 5-267 (VIIFDTTLRD…DTRINTQEIH (263 aa)) constitute a Pyruvate carboxyltransferase domain. Mn(2+) contacts are provided by Asp14, His202, His204, and Asn238. A regulatory domain region spans residues 392-515 (VLDKLSAHST…VADIKNHKHH (124 aa)).

This sequence belongs to the alpha-IPM synthase/homocitrate synthase family. LeuA type 1 subfamily. In terms of assembly, homodimer. Mn(2+) is required as a cofactor.

Its subcellular location is the cytoplasm. The catalysed reaction is 3-methyl-2-oxobutanoate + acetyl-CoA + H2O = (2S)-2-isopropylmalate + CoA + H(+). Its pathway is amino-acid biosynthesis; L-leucine biosynthesis; L-leucine from 3-methyl-2-oxobutanoate: step 1/4. Its function is as follows. Catalyzes the condensation of the acetyl group of acetyl-CoA with 3-methyl-2-oxobutanoate (2-ketoisovalerate) to form 3-carboxy-3-hydroxy-4-methylpentanoate (2-isopropylmalate). This is 2-isopropylmalate synthase from Haemophilus influenzae (strain PittEE).